We begin with the raw amino-acid sequence, 171 residues long: uncharacterized protein (171 aa).

Residues 1–18 form the signal peptide; it reads MRYSKLTMLIPCALLLSA. Residue cysteine 19 is the site of N-palmitoyl cysteine attachment. The S-diacylglycerol cysteine moiety is linked to residue cysteine 19.

It localises to the cell membrane. This is an uncharacterized protein from Escherichia coli (strain K12).